The primary structure comprises 1332 residues: Misshapen-like kinase 1 (1332 aa).

Residues 25-289 (FELVEVVGNG…TEQLLKFPFI (265 aa)) enclose the Protein kinase domain. ATP is bound by residues 31–39 (VGNGTYGQV) and lysine 54. The active-site Proton acceptor is aspartate 153. Disordered regions lie at residues 300-347 (IQLK…NVPG), 363-383 (KSNS…QRDP), and 395-887 (QRRI…GTMV). Acidic residues predominate over residues 317 to 333 (EETEYEYSGSEEEDDSH). A phosphoserine mark is found at serine 324 and serine 326. Over residues 371-380 (QQQQLQQQQQ) the composition is skewed to low complexity. Positions 396–466 (RRIEEQKEER…EEQRQSERLQ (71 aa)) are enriched in basic and acidic residues. Residues 479–497 (LQQQQQQQQLQKQQQQQLL) are compositionally biased toward low complexity. Arginine 501 and arginine 509 each carry omega-N-methylarginine. The span at 518–528 (AWAREVEERTR) shows a compositional bias: basic and acidic residues. Over residues 547 to 561 (PEPPIPQASPGPPGP) the composition is skewed to pro residues. Residues 598-608 (RSQSLQDQPTR) are compositionally biased toward polar residues. At serine 641 the chain carries Phosphoserine. The span at 670 to 682 (QRTSSIATALNTS) shows a compositional bias: polar residues. The residue at position 701 (serine 701) is a Phosphoserine. Pro residues predominate over residues 716–729 (PKPPGPPAQPPGPP). Basic and acidic residues predominate over residues 736 to 748 (DLRRSDPGWERSD). A phosphoserine mark is found at serine 754, serine 763, serine 777, serine 778, and serine 782. Residues 804-821 (LLKERTLDEAPRPPKKAM) are compositionally biased toward basic and acidic residues. The segment covering 828 to 841 (EEVESSEDDEEEGE) has biased composition (acidic residues). The interval 866 to 1332 (MVVHDVEEIT…TLNRNCIMNW (467 aa)) is mediates interaction with RAP2A. Threonine 891 carries the post-translational modification Phosphothreonine. The tract at residues 902–943 (DSNGYTNLPDVVQPSHSPTENSKGQSPPSKDGSGDYQSRGLV) is disordered. The segment covering 915–929 (PSHSPTENSKGQSPP) has biased composition (polar residues). A CNH domain is found at 1019–1306 (NSEILCAALW…KFLCERNDKV (288 aa)).

This sequence belongs to the protein kinase superfamily. STE Ser/Thr protein kinase family. STE20 subfamily. In terms of assembly, interacts with TANC1. Interacts with RAP2A. Isoform 4 interacts with NCK1. Mg(2+) serves as cofactor. Autophosphorylated. As to expression, expressed in the brain, isoform 2 is more abundant than isoform 1. Isoform 3 is ubiquitously expressed. Isoform 1 is most abundant in the skeletal muscle. Isoform 4 is ubiquitously expressed with relative high levels in brain, skeletal muscle, pancreas and testis.

Its subcellular location is the cytoplasm. It localises to the postsynaptic density. The protein resides in the cell projection. The protein localises to the axon. It is found in the dendrite. Its subcellular location is the golgi apparatus. It catalyses the reaction L-seryl-[protein] + ATP = O-phospho-L-seryl-[protein] + ADP + H(+). It carries out the reaction L-threonyl-[protein] + ATP = O-phospho-L-threonyl-[protein] + ADP + H(+). Functionally, serine/threonine kinase which acts as a negative regulator of Ras-related Rap2-mediated signal transduction to control neuronal structure and AMPA receptor trafficking. Required for normal synaptic density, dendrite complexity, as well as surface AMPA receptor expression in hippocampal neurons. Can activate the JNK and MAPK14/p38 pathways and mediates stimulation of the stress-activated protein kinase MAPK14/p38 MAPK downstream of the Raf/ERK pathway. Phosphorylates TANC1 upon stimulation by RAP2A, MBP and SMAD1. Has an essential function in negative selection of thymocytes, perhaps by coupling NCK1 to activation of JNK1. Activator of the Hippo signaling pathway which plays a pivotal role in organ size control and tumor suppression by restricting proliferation and promoting apoptosis. MAP4Ks act in parallel to and are partially redundant with STK3/MST2 and STK4/MST2 in the phosphorylation and activation of LATS1/2, and establish MAP4Ks as components of the expanded Hippo pathway. In terms of biological role, isoform 4 can activate the JNK pathway. Involved in the regulation of actin cytoskeleton reorganization, cell-matrix adhesion, cell-cell adhesion and cell migration. The protein is Misshapen-like kinase 1 of Homo sapiens (Human).